We begin with the raw amino-acid sequence, 701 residues long: Polyribonucleotide nucleotidyltransferase (701 aa).

Mg(2+) is bound by residues aspartate 487 and aspartate 493. The KH domain maps to 553–612 (PRLYTLRINPDKIRDVIGKGGSVIRALTEETGTSIDIAEDGLITIASVSAEGAEEAKRRI). An S1 motif domain is found at 622–692 (GKIYEGTVVK…ERGRIRLSIK (71 aa)).

It belongs to the polyribonucleotide nucleotidyltransferase family. The cofactor is Mg(2+).

It localises to the cytoplasm. It catalyses the reaction RNA(n+1) + phosphate = RNA(n) + a ribonucleoside 5'-diphosphate. Its function is as follows. Involved in mRNA degradation. Catalyzes the phosphorolysis of single-stranded polyribonucleotides processively in the 3'- to 5'-direction. This is Polyribonucleotide nucleotidyltransferase from Laribacter hongkongensis (strain HLHK9).